Reading from the N-terminus, the 241-residue chain is Probable transcriptional regulatory protein Daro_4067 (241 aa).

Positions 1–22 are disordered; sequence MAGHSKWANIQHRKGRQDEKRG.

Belongs to the TACO1 family.

The protein resides in the cytoplasm. In Dechloromonas aromatica (strain RCB), this protein is Probable transcriptional regulatory protein Daro_4067.